We begin with the raw amino-acid sequence, 227 residues long: DnaJ homolog subfamily B member 8 (227 aa).

The region spanning 3–69 (NYYEVLGVQS…KKRSVYDRAG (67 aa)) is the J domain.

In terms of assembly, interacts with histone deacetylases HDAC4, HDAC6, and SIRT2, HDAC activity is required for antiaggregation.

In terms of biological role, efficient suppressor of aggregation and toxicity of disease-associated polyglutamine proteins. The polypeptide is DnaJ homolog subfamily B member 8 (Dnajb8) (Mus musculus (Mouse)).